Reading from the N-terminus, the 362-residue chain is Chorismate synthase (362 aa).

NADP(+) is bound by residues R48 and R54. Residues 125–127 (RSS), 238–239 (NA), G286, 301–305 (KPTSS), and R327 contribute to the FMN site.

It belongs to the chorismate synthase family. Homotetramer. Requires FMNH2 as cofactor.

It carries out the reaction 5-O-(1-carboxyvinyl)-3-phosphoshikimate = chorismate + phosphate. It functions in the pathway metabolic intermediate biosynthesis; chorismate biosynthesis; chorismate from D-erythrose 4-phosphate and phosphoenolpyruvate: step 7/7. Catalyzes the anti-1,4-elimination of the C-3 phosphate and the C-6 proR hydrogen from 5-enolpyruvylshikimate-3-phosphate (EPSP) to yield chorismate, which is the branch point compound that serves as the starting substrate for the three terminal pathways of aromatic amino acid biosynthesis. This reaction introduces a second double bond into the aromatic ring system. This is Chorismate synthase from Granulibacter bethesdensis (strain ATCC BAA-1260 / CGDNIH1).